The chain runs to 406 residues: Acetylornithine aminotransferase (406 aa).

Residues 113–114 (GT) and F145 contribute to the pyridoxal 5'-phosphate site. R148 provides a ligand contact to N(2)-acetyl-L-ornithine. A pyridoxal 5'-phosphate-binding site is contributed by 233-236 (DEIQ). Position 262 is an N6-(pyridoxal phosphate)lysine (K262). Residue S290 participates in N(2)-acetyl-L-ornithine binding. Residue T291 participates in pyridoxal 5'-phosphate binding.

Belongs to the class-III pyridoxal-phosphate-dependent aminotransferase family. ArgD subfamily. In terms of assembly, homodimer. Pyridoxal 5'-phosphate is required as a cofactor.

Its subcellular location is the cytoplasm. The catalysed reaction is N(2)-acetyl-L-ornithine + 2-oxoglutarate = N-acetyl-L-glutamate 5-semialdehyde + L-glutamate. It functions in the pathway amino-acid biosynthesis; L-arginine biosynthesis; N(2)-acetyl-L-ornithine from L-glutamate: step 4/4. The chain is Acetylornithine aminotransferase from Leptospira interrogans serogroup Icterohaemorrhagiae serovar Lai (strain 56601).